Here is a 520-residue protein sequence, read N- to C-terminus: MKIEIAIVLILAAAGLGYFVGNMLRKRISDTLVSKAEELASKIVDDAKREAETITKEAELKAKDEVFQAKAEAERDAKEKRKDLQALEKRLQQKEENLDKKMNLFDQRDADLTKKDQALLNREQGLVQKEERLDGLIAEQREKLESISGLSSTEAKKILMDAMESEAKLDAAKRIKVIEEEARETADKKSKEIMALAIQRYAGEYVAERSVSVVALPSDEMKGRIIGREGRNIRALEAATGIDLIIDDTPEAVILSGFNPVRREVAKIALEKLITDGRIHPGRIEEVVAKAEEEVEQTIKEAGDQAAFDLGVHGIHPEILKLIGRLKYRTSYSQNVYQHSLEVAFLCGIMASELGINVKQAKRAGLLHDLGKAVDHEVEGSHAVIGAELARKYGESPKIVHAIMAHHEDEKPNTVLAVLVQAADALSGARPGARREMMETYVKRLDDLERIATSFVGVNNSFAIQAGREIRVMVSSDEVTDERAVVLAKDIAKKIEAEMTYPGQIKVNVIRETRAIEYAR.

The helical transmembrane segment at 3–23 threads the bilayer; it reads IEIAIVLILAAAGLGYFVGNM. Positions 210–273 constitute a KH domain; sequence SVSVVALPSD…EVAKIALEKL (64 aa). In terms of domain architecture, HD spans 336–429; sequence VYQHSLEVAF…VQAADALSGA (94 aa).

Belongs to the RNase Y family.

It localises to the cell membrane. Endoribonuclease that initiates mRNA decay. This Geobacter metallireducens (strain ATCC 53774 / DSM 7210 / GS-15) protein is Ribonuclease Y.